Here is a 148-residue protein sequence, read N- to C-terminus: Ubiquitin-conjugating enzyme E2 4 (148 aa).

The interval 1–22 is disordered; sequence MSSSKRIAKELSDLERDPPTSC. A UBC core domain is found at 2-148; the sequence is SSSKRIAKEL…AREWTKKYAV (147 aa). Residues 7 to 18 are compositionally biased toward basic and acidic residues; sequence IAKELSDLERDP. Serine 12 is modified (phosphoserine). The active-site Glycyl thioester intermediate is the cysteine 86. Residue lysine 91 forms a Glycyl lysine isopeptide (Lys-Gly) (interchain with G-Cter in ubiquitin) linkage.

This sequence belongs to the ubiquitin-conjugating enzyme family. Interacts with TUL1. The N-terminus is blocked.

The catalysed reaction is S-ubiquitinyl-[E1 ubiquitin-activating enzyme]-L-cysteine + [E2 ubiquitin-conjugating enzyme]-L-cysteine = [E1 ubiquitin-activating enzyme]-L-cysteine + S-ubiquitinyl-[E2 ubiquitin-conjugating enzyme]-L-cysteine.. It participates in protein modification; protein ubiquitination. Its function is as follows. E2 ubiquitin-conjugating enzyme that catalyzes the covalent attachment of ubiquitin to other proteins. Mediates the selective degradation of short-lived and abnormal proteins. Mediates ubiquitination of PEX5. In Saccharomyces cerevisiae (strain ATCC 204508 / S288c) (Baker's yeast), this protein is Ubiquitin-conjugating enzyme E2 4.